Consider the following 3148-residue polypeptide: Huntingtin (3148 aa).

HEAT repeat units lie at residues 149 to 186 (PYLVNLLPCLTRITKRQEETIQETLAAAMPKIMAALGH) and 191 to 228 (GEIKMLLKSFVANLKSSSPTIRRTAASSAVSVCQHSRR). 3 stretches are compositionally biased toward polar residues: residues 428-451 (QQPRSSQHTIQPGDSVDLSASSEQ), 475-486 (SRSSSCGANITP), and 516-526 (PSDSSQTTTEG). Disordered regions lie at residues 428 to 532 (QQPR…SAVT) and 557 to 622 (QDEE…NKMS). Positions 602–621 (SVDRFIPKDEPPEPEPDNKM) are enriched in basic and acidic residues. HEAT repeat units lie at residues 760–797 (LSLVDLVPLLQKALKDESSVTCKMACSAVRHCIMSLCG) and 861–898 (LQERVLNDVVIQLLGDDDPRVRHVAASAVSRLVSRLFF). Composition is skewed to low complexity over residues 1025–1042 (TLSVSQSGSTPASSTTSS) and 1105–1115 (SSSSTNTSGGT). Disordered stretches follow at residues 1025–1047 (TLSVSQSGSTPASSTTSSAVDPE), 1098–1117 (WAGEDDSSSSSTNTSGGTHK), and 1158–1215 (GPPV…GSTA). Over residues 1201-1215 (EANTGRPTESTGSTA) the composition is skewed to polar residues. An HEAT 5 repeat occupies 1419 to 1456 (LFEPLVIKALKQYTTSTSVALQRQVLDLLAQLVQLRVN). Residues 1712 to 1730 (PNLSPSDQPAGDGQQNQEP) are compositionally biased toward polar residues. 2 disordered regions span residues 1712 to 1735 (PNLSPSDQPAGDGQQNQEPNGEAQ) and 2072 to 2091 (VSDTSSPSTPVTSHPLDGDP). Over residues 2072 to 2084 (VSDTSSPSTPVTS) the composition is skewed to low complexity. The short motif at 2398 to 2407 (IIISLSRLPL) is the Nuclear export signal element. Positions 2639-2649 (EWGEDEDDEAD) are enriched in acidic residues. Residues 2639–2664 (EWGEDEDDEADPPAPTSPPLSPINSR) are disordered. Pro residues predominate over residues 2650–2659 (PPAPTSPPLS).

It belongs to the huntingtin family.

Its subcellular location is the cytoplasm. It is found in the nucleus. Functionally, may play a role in microtubule-mediated transport or vesicle function. This chain is Huntingtin (htt), found in Takifugu rubripes (Japanese pufferfish).